A 150-amino-acid polypeptide reads, in one-letter code: MSQLIFSQPSEDKSALEDAGDFTPRFDDRGLITAIVTDAGDGELLMVAHMNAQALALTIQTGTAHYFSRSRGKIWKKGETSGNLQTVKEIRTDCDQDAIWLKVEVAGHDATCHTGRRSCFYRTIALRDGKPMLDIVDDERHFDPQDVYGK.

Residue Asp93 participates in Mg(2+) binding. Cys94 is a Zn(2+) binding site. Asp95 and Asp97 together coordinate Mg(2+). The Zn(2+) site is built by Cys112 and Cys119.

The protein belongs to the PRA-CH family. Homodimer. Mg(2+) is required as a cofactor. Zn(2+) serves as cofactor.

The protein resides in the cytoplasm. It catalyses the reaction 1-(5-phospho-beta-D-ribosyl)-5'-AMP + H2O = 1-(5-phospho-beta-D-ribosyl)-5-[(5-phospho-beta-D-ribosylamino)methylideneamino]imidazole-4-carboxamide. It participates in amino-acid biosynthesis; L-histidine biosynthesis; L-histidine from 5-phospho-alpha-D-ribose 1-diphosphate: step 3/9. Catalyzes the hydrolysis of the adenine ring of phosphoribosyl-AMP. The polypeptide is Phosphoribosyl-AMP cyclohydrolase (Rhizobium leguminosarum bv. trifolii (strain WSM2304)).